The primary structure comprises 158 residues: Cyclic pyranopterin monophosphate synthase (158 aa).

Substrate-binding positions include 75-77 and 113-114; these read LCH and ME. D128 is a catalytic residue.

The protein belongs to the MoaC family. Homohexamer; trimer of dimers.

It carries out the reaction (8S)-3',8-cyclo-7,8-dihydroguanosine 5'-triphosphate = cyclic pyranopterin phosphate + diphosphate. It functions in the pathway cofactor biosynthesis; molybdopterin biosynthesis. Its function is as follows. Catalyzes the conversion of (8S)-3',8-cyclo-7,8-dihydroguanosine 5'-triphosphate to cyclic pyranopterin monophosphate (cPMP). This chain is Cyclic pyranopterin monophosphate synthase, found in Mannheimia succiniciproducens (strain KCTC 0769BP / MBEL55E).